A 204-amino-acid chain; its full sequence is Large ribosomal subunit protein uL4 (204 aa).

Residues 49–75 (TKGRSDVSGGGKKPWRQKGRGGARAGS) form a disordered region.

The protein belongs to the universal ribosomal protein uL4 family. In terms of assembly, part of the 50S ribosomal subunit.

One of the primary rRNA binding proteins, this protein initially binds near the 5'-end of the 23S rRNA. It is important during the early stages of 50S assembly. It makes multiple contacts with different domains of the 23S rRNA in the assembled 50S subunit and ribosome. Functionally, forms part of the polypeptide exit tunnel. The chain is Large ribosomal subunit protein uL4 from Campylobacter jejuni subsp. doylei (strain ATCC BAA-1458 / RM4099 / 269.97).